We begin with the raw amino-acid sequence, 22 residues long: Probable ATP-dependent Clp protease proteolytic subunit (22 aa).

Belongs to the peptidase S14 family. In terms of assembly, component of the chloroplastic Clp protease core complex.

The enzyme catalyses Hydrolysis of proteins to small peptides in the presence of ATP and magnesium. alpha-casein is the usual test substrate. In the absence of ATP, only oligopeptides shorter than five residues are hydrolyzed (such as succinyl-Leu-Tyr-|-NHMec, and Leu-Tyr-Leu-|-Tyr-Trp, in which cleavage of the -Tyr-|-Leu- and -Tyr-|-Trp bonds also occurs).. Functionally, cleaves peptides in various proteins in a process that requires ATP hydrolysis. Has a chymotrypsin-like activity. Plays a major role in the degradation of misfolded proteins. This chain is Probable ATP-dependent Clp protease proteolytic subunit, found in Populus euphratica (Euphrates poplar).